Consider the following 93-residue polypeptide: Large ribosomal subunit protein uL23cz/uL23cy (93 aa).

It belongs to the universal ribosomal protein uL23 family. As to quaternary structure, part of the 50S ribosomal subunit.

The protein resides in the plastid. It localises to the chloroplast. Its function is as follows. Binds to 23S rRNA. The protein is Large ribosomal subunit protein uL23cz/uL23cy (rpl23-A) of Cucumis sativus (Cucumber).